The following is a 279-amino-acid chain: 4-diphosphocytidyl-2-C-methyl-D-erythritol kinase (279 aa).

Residue Lys-10 is part of the active site. 91 to 101 (PVASGIGGGSA) serves as a coordination point for ATP. The active site involves Asp-130.

It belongs to the GHMP kinase family. IspE subfamily.

It carries out the reaction 4-CDP-2-C-methyl-D-erythritol + ATP = 4-CDP-2-C-methyl-D-erythritol 2-phosphate + ADP + H(+). Its pathway is isoprenoid biosynthesis; isopentenyl diphosphate biosynthesis via DXP pathway; isopentenyl diphosphate from 1-deoxy-D-xylulose 5-phosphate: step 3/6. Catalyzes the phosphorylation of the position 2 hydroxy group of 4-diphosphocytidyl-2C-methyl-D-erythritol. In Ruegeria pomeroyi (strain ATCC 700808 / DSM 15171 / DSS-3) (Silicibacter pomeroyi), this protein is 4-diphosphocytidyl-2-C-methyl-D-erythritol kinase.